The chain runs to 783 residues: Cation/H(+) antiporter 10 (783 aa).

A run of 12 helical transmembrane segments spans residues 31-51 (VVFG…FFCI), 61-81 (IGIS…PQLF), 100-120 (IAAL…LMTV), 135-155 (VVIG…QNFF), 175-195 (AIVI…LLEL), 206-226 (ALSA…VASI), 244-264 (AVII…QWVI), 276-295 (MYIH…FVFF), 300-322 (ILGP…ALEA), 356-376 (IFFN…ACLA), 389-409 (LAVS…YEAV), and 418-438 (ATYS…PTVL).

Belongs to the monovalent cation:proton antiporter 2 (CPA2) transporter (TC 2.A.37) family. CHX (TC 2.A.37.4) subfamily. In terms of tissue distribution, specifically expressed in pollen.

Its subcellular location is the membrane. May operate as a cation/H(+) antiporter. This Arabidopsis thaliana (Mouse-ear cress) protein is Cation/H(+) antiporter 10 (CHX10).